A 412-amino-acid chain; its full sequence is CinA-like protein (412 aa).

Belongs to the CinA family.

The sequence is that of CinA-like protein from Salinibacter ruber (strain DSM 13855 / M31).